A 154-amino-acid polypeptide reads, in one-letter code: Large ribosomal subunit protein uL13 (154 aa).

Belongs to the universal ribosomal protein uL13 family. Part of the 50S ribosomal subunit.

Functionally, this protein is one of the early assembly proteins of the 50S ribosomal subunit, although it is not seen to bind rRNA by itself. It is important during the early stages of 50S assembly. The chain is Large ribosomal subunit protein uL13 from Bradyrhizobium diazoefficiens (strain JCM 10833 / BCRC 13528 / IAM 13628 / NBRC 14792 / USDA 110).